Here is a 401-residue protein sequence, read N- to C-terminus: Imidazolonepropionase (401 aa).

Histidine 66 and histidine 68 together coordinate Fe(3+). Residues histidine 66 and histidine 68 each contribute to the Zn(2+) site. Residues arginine 75, tyrosine 138, and histidine 171 each contribute to the 4-imidazolone-5-propanoate site. Tyrosine 138 contacts N-formimidoyl-L-glutamate. A Fe(3+)-binding site is contributed by histidine 236. Histidine 236 serves as a coordination point for Zn(2+). Residue glutamine 239 participates in 4-imidazolone-5-propanoate binding. Aspartate 311 contributes to the Fe(3+) binding site. Aspartate 311 serves as a coordination point for Zn(2+). N-formimidoyl-L-glutamate-binding residues include asparagine 313 and glycine 315. Position 316 (threonine 316) interacts with 4-imidazolone-5-propanoate.

This sequence belongs to the metallo-dependent hydrolases superfamily. HutI family. Zn(2+) serves as cofactor. It depends on Fe(3+) as a cofactor.

Its subcellular location is the cytoplasm. The enzyme catalyses 4-imidazolone-5-propanoate + H2O = N-formimidoyl-L-glutamate. It participates in amino-acid degradation; L-histidine degradation into L-glutamate; N-formimidoyl-L-glutamate from L-histidine: step 3/3. Its function is as follows. Catalyzes the hydrolytic cleavage of the carbon-nitrogen bond in imidazolone-5-propanoate to yield N-formimidoyl-L-glutamate. It is the third step in the universal histidine degradation pathway. This chain is Imidazolonepropionase, found in Acinetobacter baumannii (strain AB0057).